Reading from the N-terminus, the 537-residue chain is Hydroxylamine reductase (537 aa).

[4Fe-4S] cluster-binding residues include cysteine 3, cysteine 6, cysteine 15, and cysteine 21. Residues histidine 239, glutamate 263, cysteine 307, cysteine 393, cysteine 421, cysteine 446, glutamate 480, and lysine 482 each coordinate hybrid [4Fe-2O-2S] cluster. Cysteine 393 carries the cysteine persulfide modification.

It belongs to the HCP family. Requires [4Fe-4S] cluster as cofactor. Hybrid [4Fe-2O-2S] cluster is required as a cofactor.

The protein resides in the cytoplasm. The catalysed reaction is A + NH4(+) + H2O = hydroxylamine + AH2 + H(+). Its function is as follows. Catalyzes the reduction of hydroxylamine to form NH(3) and H(2)O. This chain is Hydroxylamine reductase, found in Lawsonia intracellularis (strain PHE/MN1-00).